The following is a 747-amino-acid chain: AMP deaminase 1 (747 aa).

Thr-81 is subject to Phosphothreonine. Ser-85 bears the Phosphoserine mark. Tyr-216 carries the phosphotyrosine modification. Positions 303 and 305 each coordinate Zn(2+). Substrate contacts are provided by residues His-305 and 374–379 (KFNDKY). A Phosphoserine modification is found at Ser-441. His-572 contributes to the Zn(2+) binding site. Glu-575 contacts substrate. The Proton acceptor role is filled by His-594. Residue Asp-649 participates in Zn(2+) binding. 650-653 (DPMQ) is a binding site for substrate.

This sequence belongs to the metallo-dependent hydrolases superfamily. Adenosine and AMP deaminases family. In terms of assembly, homotetramer. Requires Zn(2+) as cofactor.

The enzyme catalyses AMP + H2O + H(+) = IMP + NH4(+). It functions in the pathway purine metabolism; IMP biosynthesis via salvage pathway; IMP from AMP: step 1/1. Functionally, AMP deaminase plays a critical role in energy metabolism. The polypeptide is AMP deaminase 1 (Homo sapiens (Human)).